The chain runs to 241 residues: Phosphoribosylaminoimidazole-succinocarboxamide synthase (241 aa).

The protein belongs to the SAICAR synthetase family.

The catalysed reaction is 5-amino-1-(5-phospho-D-ribosyl)imidazole-4-carboxylate + L-aspartate + ATP = (2S)-2-[5-amino-1-(5-phospho-beta-D-ribosyl)imidazole-4-carboxamido]succinate + ADP + phosphate + 2 H(+). It participates in purine metabolism; IMP biosynthesis via de novo pathway; 5-amino-1-(5-phospho-D-ribosyl)imidazole-4-carboxamide from 5-amino-1-(5-phospho-D-ribosyl)imidazole-4-carboxylate: step 1/2. This is Phosphoribosylaminoimidazole-succinocarboxamide synthase from Methanoculleus marisnigri (strain ATCC 35101 / DSM 1498 / JR1).